The primary structure comprises 556 residues: MPVDLGQALGPLPFLAKAEDATFSASDATQQRELANPETARQLFRQFRYQVLSGPQETLRQLRKLCFQWLRPEVHTKEQILELLMLEQFLTILPGEIQMWVRKQCPGSGQEAVTLVESLKGEPQKLWHWISTQVLGQEIPFEKENLTHCPGDKLEPALEVEPSLEVAPQDLPLQNSSSATGELLSHGVKEESDMEPELALAASQLPARPEERPVRDQELGTAVLPPLQEEQWRHLDSTQKEQYWDLMLETYGKMVSGVAGISNSKPDLTNLAEYGEELVGLHLHGAEKMARLPCKEDRQENDKENLNLENHRDQGCLDVFCQASGEAPPQTALSDFFGESEPHRFGGDSVPEALENHQGEGTGAHLFPYERGSGKQPGQHIQSSSLGELTALWLEEKREASQKGQARSPMAQKLPTCRECGKTFYRNSQLVFHQRTHTGETYFHCHICKKAFLRSSDFVKHQRTHTGEKPCKCDYCGKGFSDFSGLRHHEKIHTGEKPYKCPLCEKSFIQRSNFNRHQRVHTGEKPYKCTHCGKQFSWSSSLDKHQRSHLGKMPCP.

The region spanning 41-123 (RQLFRQFRYQ…TLVESLKGEP (83 aa)) is the SCAN box domain. Residues 169–195 (QDLPLQNSSSATGELLSHGVKEESDME) are disordered. Residues 218–291 (ELGTAVLPPL…HLHGAEKMAR (74 aa)) form the KRAB domain. 5 C2H2-type zinc fingers span residues 415–437 (PTCRECGKTFYRNSQLVFHQRTH), 443–465 (FHCHICKKAFLRSSDFVKHQRTH), 471–493 (CKCDYCGKGFSDFSGLRHHEKIH), 499–521 (YKCPLCEKSFIQRSNFNRHQRVH), and 527–549 (YKCTHCGKQFSWSSSLDKHQRSH).

This sequence belongs to the krueppel C2H2-type zinc-finger protein family.

It localises to the nucleus. May be involved in transcriptional regulation. In Mus musculus (Mouse), this protein is Zinc finger protein 18 (Znf18).